Here is a 590-residue protein sequence, read N- to C-terminus: V-type ATP synthase alpha chain (590 aa).

An ATP-binding site is contributed by 234–241 (GGFGAGKT).

Belongs to the ATPase alpha/beta chains family.

It catalyses the reaction ATP + H2O + 4 H(+)(in) = ADP + phosphate + 5 H(+)(out). Its function is as follows. Produces ATP from ADP in the presence of a proton gradient across the membrane. The V-type alpha chain is a catalytic subunit. This is V-type ATP synthase alpha chain from Halothermothrix orenii (strain H 168 / OCM 544 / DSM 9562).